A 1314-amino-acid polypeptide reads, in one-letter code: E3 ubiquitin-protein ligase RNF123 (1314 aa).

Residue Ala2 is modified to N-acetylalanine. A B30.2/SPRY domain is found at 74–254; that stretch reads VDSEDEESQG…VAFNFGSRPL (181 aa). The interval 460 to 481 is disordered; the sequence is HRSSREGKDSAEDRAEAAEERP. Positions 462 to 481 are enriched in basic and acidic residues; it reads SSREGKDSAEDRAEAAEERP. Ser675 is modified (phosphoserine). An Asymmetric dimethylarginine modification is found at Arg683. An interaction with NFKB1 region spans residues 968 to 974; sequence WILVRLW. Zn(2+) contacts are provided by Cys1254, Cys1257, Cys1269, His1271, Cys1274, Cys1277, Cys1288, and Cys1291. The segment at 1254–1292 adopts an RING-type zinc-finger fold; it reads CPICYAHPISAVFQPCGHKSCKACIDQHLMNNKDCFFCK.

Component of the KPC complex composed of RNF123/KPC1 and UBAC1/KPC2. Interacts with UBAC1 and CDKN1B via its N-terminal domain. Interacts with RIGI (via N-terminus) and IFIH1 (via N-terminus). Ubiquitinated, leading to its degradation. Deubiquitinated by USP19, thereby stimulating CDKN1B ubiquitin-dependent degradation.

Its subcellular location is the cytoplasm. It carries out the reaction S-ubiquitinyl-[E2 ubiquitin-conjugating enzyme]-L-cysteine + [acceptor protein]-L-lysine = [E2 ubiquitin-conjugating enzyme]-L-cysteine + N(6)-ubiquitinyl-[acceptor protein]-L-lysine.. It functions in the pathway protein modification; protein ubiquitination. In terms of biological role, catalytic subunit of the KPC complex that acts as E3 ubiquitin-protein ligase. Promotes the ubiquitination and proteasome-mediated degradation of CDKN1B which is the cyclin-dependent kinase inhibitor at the G0-G1 transition of the cell cycle. Also acts as a key regulator of the NF-kappa-B signaling by promoting maturation of the NFKB1 component of NF-kappa-B. Acts by catalyzing ubiquitination of the NFKB1 p105 precursor, leading to limited proteasomal degradation of NFKB1 p105 and generation of the active NFKB1 p50 subunit. Functions also as an inhibitor of innate antiviral signaling mediated by RIGI and IFIH1 independently of its E3 ligase activity. Interacts with the N-terminal CARD domains of RIGI and IFIH1 and competes with the downstream adapter MAVS. This Oryctolagus cuniculus (Rabbit) protein is E3 ubiquitin-protein ligase RNF123.